The primary structure comprises 289 residues: ADP-dependent (S)-NAD(P)H-hydrate dehydratase (289 aa).

The region spanning 9–286 (VTAAALRAQP…PEVPGILDRL (278 aa)) is the YjeF C-terminal domain. Residues A44 and H160 each coordinate (6S)-NADPHX. AMP-binding positions include 197–201 (KGADS) and G226. D227 provides a ligand contact to (6S)-NADPHX.

Belongs to the NnrD/CARKD family. In terms of assembly, homotetramer. Requires Mg(2+) as cofactor.

The catalysed reaction is (6S)-NADHX + ADP = AMP + phosphate + NADH + H(+). It carries out the reaction (6S)-NADPHX + ADP = AMP + phosphate + NADPH + H(+). Its function is as follows. Catalyzes the dehydration of the S-form of NAD(P)HX at the expense of ADP, which is converted to AMP. Together with NAD(P)HX epimerase, which catalyzes the epimerization of the S- and R-forms, the enzyme allows the repair of both epimers of NAD(P)HX, a damaged form of NAD(P)H that is a result of enzymatic or heat-dependent hydration. The protein is ADP-dependent (S)-NAD(P)H-hydrate dehydratase of Xanthomonas campestris pv. campestris (strain ATCC 33913 / DSM 3586 / NCPPB 528 / LMG 568 / P 25).